A 69-amino-acid chain; its full sequence is Large ribosomal subunit protein uL29 (69 aa).

The protein belongs to the universal ribosomal protein uL29 family.

This is Large ribosomal subunit protein uL29 from Synechococcus sp. (strain CC9902).